The chain runs to 62 residues: Large ribosomal subunit protein eL37 (62 aa).

Zn(2+)-binding residues include Cys-20, Cys-23, Cys-35, and Cys-38. The segment at 20 to 38 adopts a C4-type zinc-finger fold; that stretch reads CRRCGRRSYHVRKKACSAC.

The protein belongs to the eukaryotic ribosomal protein eL37 family. Zn(2+) serves as cofactor.

Its function is as follows. Binds to the 23S rRNA. This chain is Large ribosomal subunit protein eL37, found in Methanococcus aeolicus (strain ATCC BAA-1280 / DSM 17508 / OCM 812 / Nankai-3).